Consider the following 206-residue polypeptide: MARYIGPKCKLARREGTDLFLKSARRALDSKCKLDAAPGQHGARRGRLSDYGVQLREKQKIRRIYGVLERQFRNYFAEAVRRKGSTGENLLKLLESRLDNVVYRMGFGSTRAEARQLVSHKAIVVNGQVVNIPSYQVKAGDVVSVREKAKKQARIVEGLALAEQGGFPSWVSVDSKKMEGTFKSAPERSELSSDINEQLVVEFYSK.

The region spanning 96–159 is the S4 RNA-binding domain; it reads SRLDNVVYRM…KKQARIVEGL (64 aa).

It belongs to the universal ribosomal protein uS4 family. Part of the 30S ribosomal subunit. Contacts protein S5. The interaction surface between S4 and S5 is involved in control of translational fidelity.

In terms of biological role, one of the primary rRNA binding proteins, it binds directly to 16S rRNA where it nucleates assembly of the body of the 30S subunit. Functionally, with S5 and S12 plays an important role in translational accuracy. The chain is Small ribosomal subunit protein uS4 from Chromobacterium violaceum (strain ATCC 12472 / DSM 30191 / JCM 1249 / CCUG 213 / NBRC 12614 / NCIMB 9131 / NCTC 9757 / MK).